The following is a 286-amino-acid chain: Pantothenate synthetase (286 aa).

30–37 (MGNLHDGH) provides a ligand contact to ATP. The Proton donor role is filled by histidine 37. Residue glutamine 61 participates in (R)-pantoate binding. Glutamine 61 serves as a coordination point for beta-alanine. 149–152 (GEKD) contacts ATP. Glutamine 155 contributes to the (R)-pantoate binding site. ATP-binding positions include valine 178 and 186-189 (LSSR).

Belongs to the pantothenate synthetase family. Homodimer.

It is found in the cytoplasm. It carries out the reaction (R)-pantoate + beta-alanine + ATP = (R)-pantothenate + AMP + diphosphate + H(+). It participates in cofactor biosynthesis; (R)-pantothenate biosynthesis; (R)-pantothenate from (R)-pantoate and beta-alanine: step 1/1. Functionally, catalyzes the condensation of pantoate with beta-alanine in an ATP-dependent reaction via a pantoyl-adenylate intermediate. This is Pantothenate synthetase from Edwardsiella ictaluri (strain 93-146).